Reading from the N-terminus, the 205-residue chain is Rho GDP-dissociation inhibitor (205 aa).

Positions 1–11 (MSVNNEVSADQ) are enriched in polar residues. The interval 1–31 (MSVNNEVSADQHNPELEDDTFEHGPPVSLGE) is disordered. Position 63 is a phosphoserine (Ser-63).

Belongs to the Rho GDI family.

It is found in the cytoplasm. The protein localises to the nucleus. Functionally, regulates the GDP/GTP exchange reaction of the Rho proteins by inhibiting the dissociation of GDP from them, and the subsequent binding of GTP to them. The sequence is that of Rho GDP-dissociation inhibitor from Schizosaccharomyces pombe (strain 972 / ATCC 24843) (Fission yeast).